Here is a 176-residue protein sequence, read N- to C-terminus: Oligoribonuclease (176 aa).

One can recognise an Exonuclease domain in the interval 2 to 159 (EMTGLNPETD…DDILESIEEM (158 aa)). Tyrosine 117 is an active-site residue.

Belongs to the oligoribonuclease family.

The protein localises to the cytoplasm. 3'-to-5' exoribonuclease specific for small oligoribonucleotides. This is Oligoribonuclease from Neisseria gonorrhoeae (strain ATCC 700825 / FA 1090).